Consider the following 210-residue polypeptide: Small ribosomal subunit protein eS8y (210 aa).

The tract at residues 1–22 (MGISRDSIHKRRATGGKQKMWR) is disordered. Positions 8 to 22 (IHKRRATGGKQKMWR) are enriched in basic residues.

Belongs to the eukaryotic ribosomal protein eS8 family.

This Arabidopsis thaliana (Mouse-ear cress) protein is Small ribosomal subunit protein eS8y (RPS8B).